Consider the following 547-residue polypeptide: MAAKDVKFGNDARVKMLRGVNVLADAVKVTLGPKGRNVVLDKSFGAPTITKDGVSVAREIELEDKFENMGAQMVKEVASKANDAAGDGTTTATVLAQAIVNEGLKAVAAGMNPMDLKRGIDKAVLAAVEELKALSVPCSDSKAIAQVGTISANSDETVGKLIAEVDKVGKEGVITVEDGTGLEDELDVVEGMQFDRGYLSPYFINKPDTGAVELESPFILLADKKISNIREMLPVLEAVAKAGKPLVIIAEDVEGEALATLVVNTMRGIVKVAAVKAPGFGDRRKAMLQDIATLTGGTVISEEIGMELEKATLEDLGQAKRVVINKDTTTIIDGVGEESAIQGRVAQIRKQIEEATSDYDREKLQERVAKVAGGVAVIKVGAATEVEMKEKKARVDDALHATRAAVEEGVVAGGGVALVRVAAKLAGLTGQNEDQNVGIKVALRAMEAPLRQIVSNAGEEPSVVANNVKAGDGNYGYNAATEEYGNMIDFGILDPTKVTRSALQYAASVAGLMITTECMVTDLPKSDAPDLGAAGGMGGMGGMGGMM.

ATP-binding positions include 30–33, K51, 87–91, G414, 478–480, and D494; these read TLGP, DGTTT, and NAA.

The protein belongs to the chaperonin (HSP60) family. Forms a cylinder of 14 subunits composed of two heptameric rings stacked back-to-back. Interacts with the co-chaperonin GroES.

The protein resides in the cytoplasm. It catalyses the reaction ATP + H2O + a folded polypeptide = ADP + phosphate + an unfolded polypeptide.. Functionally, together with its co-chaperonin GroES, plays an essential role in assisting protein folding. The GroEL-GroES system forms a nano-cage that allows encapsulation of the non-native substrate proteins and provides a physical environment optimized to promote and accelerate protein folding. This Klebsiella pneumoniae protein is Chaperonin GroEL.